A 1650-amino-acid chain; its full sequence is Transmembrane domain-containing protein DDB_G0287209 (1650 aa).

Residues 194–225 are a coiled coil; that stretch reads NNNNNNFNNNNNNNNNNNNNKNNYNNNKSNLI. Disordered regions lie at residues 197 to 216 and 1218 to 1296; these read NNNF…NKNN and ENQF…NINN. Residues 1224 to 1284 are compositionally biased toward low complexity; the sequence is NNNENSGSSG…SNSNENNYNG (61 aa). The next 9 membrane-spanning stretches (helical) occupy residues 1314 to 1334, 1347 to 1369, 1390 to 1410, 1454 to 1474, 1489 to 1509, 1515 to 1535, 1539 to 1559, 1570 to 1590, and 1595 to 1615; these read PLLL…LSLF, ILFL…LQLF, ISIS…DVTS, WNIY…LIVP, ILFI…VILF, WWDL…VTLL, PVYF…QFAF, VENL…TSII, and FNLI…ITII.

Its subcellular location is the membrane. The protein is Transmembrane domain-containing protein DDB_G0287209 of Dictyostelium discoideum (Social amoeba).